Reading from the N-terminus, the 391-residue chain is NADH-quinone oxidoreductase subunit D (391 aa).

It belongs to the complex I 49 kDa subunit family. NDH-1 is composed of 14 different subunits. Subunits NuoB, C, D, E, F, and G constitute the peripheral sector of the complex.

Its subcellular location is the cell inner membrane. The catalysed reaction is a quinone + NADH + 5 H(+)(in) = a quinol + NAD(+) + 4 H(+)(out). NDH-1 shuttles electrons from NADH, via FMN and iron-sulfur (Fe-S) centers, to quinones in the respiratory chain. The immediate electron acceptor for the enzyme in this species is believed to be ubiquinone. Couples the redox reaction to proton translocation (for every two electrons transferred, four hydrogen ions are translocated across the cytoplasmic membrane), and thus conserves the redox energy in a proton gradient. This is NADH-quinone oxidoreductase subunit D from Rickettsia canadensis (strain McKiel).